We begin with the raw amino-acid sequence, 413 residues long: Enolase (413 aa).

A (2R)-2-phosphoglycerate-binding site is contributed by Gln-170. Residue Glu-212 is the Proton donor of the active site. The Mg(2+) site is built by Asp-245, Glu-286, and Asp-313. (2R)-2-phosphoglycerate contacts are provided by Lys-338, Arg-367, Ser-368, and Lys-389. The active-site Proton acceptor is Lys-338.

Belongs to the enolase family. It depends on Mg(2+) as a cofactor.

It is found in the cytoplasm. The protein resides in the secreted. The protein localises to the cell surface. It catalyses the reaction (2R)-2-phosphoglycerate = phosphoenolpyruvate + H2O. It participates in carbohydrate degradation; glycolysis; pyruvate from D-glyceraldehyde 3-phosphate: step 4/5. Its function is as follows. Catalyzes the reversible conversion of 2-phosphoglycerate (2-PG) into phosphoenolpyruvate (PEP). It is essential for the degradation of carbohydrates via glycolysis. This is Enolase from Neorickettsia sennetsu (strain ATCC VR-367 / Miyayama) (Ehrlichia sennetsu).